Consider the following 260-residue polypeptide: Phosphatidate cytidylyltransferase (260 aa).

7 helical membrane passes run 9–29 (IIAL…LMIF), 46–66 (MIKF…IIML), 70–90 (AGPW…FIVL), 102–122 (FMDA…FMFF), 130–150 (LHYI…AYLF), 172–192 (FIGG…FVDF), and 196–216 (VWIL…GDLV).

The protein belongs to the CDS family.

It localises to the cell membrane. The enzyme catalyses a 1,2-diacyl-sn-glycero-3-phosphate + CTP + H(+) = a CDP-1,2-diacyl-sn-glycerol + diphosphate. It participates in phospholipid metabolism; CDP-diacylglycerol biosynthesis; CDP-diacylglycerol from sn-glycerol 3-phosphate: step 3/3. This Staphylococcus aureus (strain COL) protein is Phosphatidate cytidylyltransferase (cdsA).